A 200-amino-acid polypeptide reads, in one-letter code: Troponin I-like protein (200 aa).

2 disordered regions span residues 1-20 (MGDE…AEVR) and 181-200 (ENKA…ENEE). Residues 2–116 (GDEEKRKMEE…EDAKYDLEYE (115 aa)) are a coiled coil.

The protein belongs to the troponin I family. As to expression, expressed in salivary gland, gut, muscle and cuticle (at protein level).

Inhibits endothelial cell proliferation and angiogenesis in a vertebrate host. Probably required for efficient blood feeding on vertebrate hosts. The chain is Troponin I-like protein from Haemaphysalis longicornis (Bush tick).